A 398-amino-acid polypeptide reads, in one-letter code: tRNA-specific 2-thiouridylase MnmA (398 aa).

Residues 18–25 (AMSGGVDS) and Leu-44 each bind ATP. Cys-112 (nucleophile) is an active-site residue. A disulfide bridge links Cys-112 with Cys-213. Position 136 (Gly-136) interacts with ATP. The interval 163–165 (RDQ) is interaction with tRNA. Residue Cys-213 is the Cysteine persulfide intermediate of the active site.

This sequence belongs to the MnmA/TRMU family.

It localises to the cytoplasm. It catalyses the reaction S-sulfanyl-L-cysteinyl-[protein] + uridine(34) in tRNA + AH2 + ATP = 2-thiouridine(34) in tRNA + L-cysteinyl-[protein] + A + AMP + diphosphate + H(+). Functionally, catalyzes the 2-thiolation of uridine at the wobble position (U34) of tRNA, leading to the formation of s(2)U34. In Sinorhizobium medicae (strain WSM419) (Ensifer medicae), this protein is tRNA-specific 2-thiouridylase MnmA.